A 342-amino-acid polypeptide reads, in one-letter code: Serine/threonine-protein kinase ISR1 (342 aa).

The Protein kinase domain occupies 59-342 (WRLTRVLGCG…SNARVAEHAF (284 aa)). ATP-binding positions include 65–73 (LGCGSVACV) and Lys-84. The active-site Proton acceptor is the Asp-190.

This sequence belongs to the protein kinase superfamily. Ser/Thr protein kinase family.

The enzyme catalyses L-seryl-[protein] + ATP = O-phospho-L-seryl-[protein] + ADP + H(+). The catalysed reaction is L-threonyl-[protein] + ATP = O-phospho-L-threonyl-[protein] + ADP + H(+). Probable serine/threonine protein kinase which may function redundantly with MPK1-independent branch of the PCK1 pathway. The polypeptide is Serine/threonine-protein kinase ISR1 (ISR1) (Eremothecium gossypii (strain ATCC 10895 / CBS 109.51 / FGSC 9923 / NRRL Y-1056) (Yeast)).